The sequence spans 1018 residues: Ubiquitin carboxyl-terminal hydrolase 35 (1018 aa).

One can recognise a USP domain in the interval 441–926 (IGLINLGNTC…TAYVLFYRQR (486 aa)). Cys-450 functions as the Nucleophile in the catalytic mechanism. Disordered regions lie at residues 544-566 (QKLK…STSV) and 610-757 (RLGS…GSEG). Pro residues predominate over residues 552 to 561 (PSPPEEPPAP). Ser-613 is subject to Phosphoserine. Basic and acidic residues-rich tracts occupy residues 673–691 (QEER…TEKE), 699–709 (STRGEGEREKE), and 718–728 (KVEKETEKEAE). His-862 functions as the Proton acceptor in the catalytic mechanism. A disordered region spans residues 984–1011 (HWGRGFDEDKDEDEGSPGGCNPAGGNGG). The segment covering 999–1011 (SPGGCNPAGGNGG) has biased composition (gly residues).

It belongs to the peptidase C19 family. As to quaternary structure, homodimer (via C-terminal region). Interacts with HSP90AA1. Post-translationally, ubiquitinated by CHIP/STUB1 in an HSP90-dependent manner; leading to proteasomal degradation. This ubiquitination can be reversed through auto-deubiquitinating activity. Expressed in testis, pancreas and skeletal muscle.

The protein localises to the cytoplasm. Its subcellular location is the mitochondrion. It carries out the reaction Thiol-dependent hydrolysis of ester, thioester, amide, peptide and isopeptide bonds formed by the C-terminal Gly of ubiquitin (a 76-residue protein attached to proteins as an intracellular targeting signal).. Deubiquitinase that plays a role in different processes including cell cycle regulation, mitophagy or endoplasmic reticulum stress. Inhibits TNFalpha-induced NF-kappa-B activation through stabilizing TNIP2 protein via deubiquitination. Plays an essential role during mitosis by deubiquitinating and thereby regulating the levels of Aurora B/AURKB protein. In addition, regulates the protein levels of other key component of the chromosomal passenger complex (CPC) such as survivin/BIRC5 or Borealin/CDCA8 by enhancing their stability. Regulates the degradation of mitochondria through the process of autophagy termed mitophagy. The protein is Ubiquitin carboxyl-terminal hydrolase 35 (USP35) of Homo sapiens (Human).